A 181-amino-acid polypeptide reads, in one-letter code: Regulator of G-protein signaling 10 (181 aa).

The tract at residues 1–32 (MFNRAVSRLSRKRPPSDIHDSDGSSSSSHQSL) is disordered. Positions 23–32 (GSSSSSHQSL) are enriched in low complexity. Phosphoserine is present on residues serine 24 and serine 41. Residues 41–156 (SLENLLEDPE…LKSDLFLKHK (116 aa)) form the RGS domain. The S-palmitoyl cysteine moiety is linked to residue cysteine 74. Residues 158–181 (TEEEEEDLPDAQTAAKRASRIYNT) form a disordered region. Position 176 is a phosphoserine (serine 176).

As to quaternary structure, interacts with GNAZ, GNAI1 and GNAI3. Associates specifically with the activated, GTP-bound forms of GNAZ and GNAI3.

The protein resides in the cytoplasm. It is found in the cytosol. Its subcellular location is the nucleus. Its function is as follows. Regulates G protein-coupled receptor signaling cascades, including signaling downstream of the muscarinic acetylcholine receptor CHRM2. Inhibits signal transduction by increasing the GTPase activity of G protein alpha subunits, thereby driving them into their inactive GDP-bound form. Modulates the activity of potassium channels that are activated in response to CHRM2 signaling. Activity on GNAZ is inhibited by palmitoylation of the G-protein. This is Regulator of G-protein signaling 10 (RGS10) from Homo sapiens (Human).